Reading from the N-terminus, the 35-residue chain is Photosystem II reaction center protein Psb30 (35 aa).

A helical membrane pass occupies residues Leu7–Ile27.

Belongs to the Psb30/Ycf12 family. As to quaternary structure, PSII is composed of 1 copy each of membrane proteins PsbA, PsbB, PsbC, PsbD, PsbE, PsbF, PsbH, PsbI, PsbJ, PsbK, PsbL, PsbM, PsbT, PsbX, PsbY, PsbZ, Psb30/Ycf12, peripheral proteins of the oxygen-evolving complex and a large number of cofactors. It forms dimeric complexes.

The protein localises to the plastid. Its subcellular location is the organellar chromatophore thylakoid membrane. Functionally, a core subunit of photosystem II (PSII), probably helps stabilize the reaction center. The sequence is that of Photosystem II reaction center protein Psb30 from Paulinella chromatophora.